We begin with the raw amino-acid sequence, 249 residues long: dTDP-4-amino-2,3,4,6-tetradeoxy-D-glucose N,N-dimethyltransferase (249 aa).

Arginine 30 lines the substrate pocket. S-adenosyl-L-methionine is bound by residues alanine 59, glutamate 80, and 102 to 103; that span reads DI. Substrate is bound by residues threonine 165, 178-182, and arginine 241; that span reads RLSHS.

Belongs to the methyltransferase TylM1/DesVI family. Homodimer. It depends on Mg(2+) as a cofactor.

It catalyses the reaction dTDP-4-amino-2,3,4,6-tetradeoxy-alpha-D-erythro-hexopyranose + 2 S-adenosyl-L-methionine = dTDP-alpha-D-forosamine + 2 S-adenosyl-L-homocysteine + 2 H(+). Functionally, involved in the biosynthesis of forosamine ((4-dimethylamino)-2,3,4,6-tetradeoxy-alpha-D-threo-hexopyranose), a highly deoxygenated sugar component of several bioactive natural products such as the insecticidal spinosyns A and D. Catalyzes the dimethylation of the C-4 amino group from dTDP-4-amino-2,3,4,6-tetradeoxy-alpha-D-glucose to yield dTDP-D-forosamine. The sequence is that of dTDP-4-amino-2,3,4,6-tetradeoxy-D-glucose N,N-dimethyltransferase from Saccharopolyspora spinosa.